The chain runs to 208 residues: CASP-like protein 2A1 (208 aa).

Over 1-36 (MEERSGVLETSRSCKQLIGPEGSDKEFEGYIDSNLR) the chain is Cytoplasmic. Residues 37 to 57 (VVETFLRLFPIGLCVTALVIM) form a helical membrane-spanning segment. The Extracellular portion of the chain corresponds to 58 to 79 (LKNSQENKYGSVSYTDLGAFRY). The chain crosses the membrane as a helical span at residues 80-100 (LVHANGICAGYSLFSAIFVAL). Residues 101–107 (PRLSSVH) lie on the Cytoplasmic side of the membrane. The helical transmembrane segment at 108–128 (IAWTFFVLDQVLTYIILSAGA) threads the bilayer. Over 129–159 (ASAEVLYLAEKGNMATAWSSACRSFGPFCHK) the chain is Extracellular. A helical transmembrane segment spans residues 160 to 180 (VTASTTITFVVVVFYVLLSLI). At 181-208 (SSYKLFSKYDAPTVSNPSMGADIVAFHG) the chain is on the cytoplasmic side.

Belongs to the Casparian strip membrane proteins (CASP) family. In terms of assembly, homodimer and heterodimers.

Its subcellular location is the cell membrane. This is CASP-like protein 2A1 from Glycine max (Soybean).